The following is a 981-amino-acid chain: Proline-rich transmembrane protein 3 (981 aa).

The first 27 residues, 1–27, serve as a signal peptide directing secretion; the sequence is MASSPWGCVCGLLLLLLPLLGTGPALG. The Extracellular segment spans residues 28 to 474; sequence RGFPRPLENS…RVLSFSWELH (447 aa). Disordered stretches follow at residues 43 to 107 and 169 to 457; these read PGAH…GAQR and PPSL…TAPP. The segment covering 65–85 has biased composition (basic and acidic residues); it reads PRADSHRNSDVRHAPAEEMPE. The O-glycosylated at one site stretch occupies residues 297–302; that stretch reads SWEVSS. O-linked (GalNAc...) serine glycosylation is present at serine 329. Positions 331 to 340 are enriched in basic and acidic residues; sequence APDRPSKPER. Threonine 363 carries an O-linked (GalNAc...) threonine glycan. N-linked (GlcNAc...) asparagine glycosylation is present at asparagine 379. Polar residues predominate over residues 411–427; sequence APSTSRRGLIRVTTQRA. Low complexity predominate over residues 437 to 457; that stretch reads TASSMASAPASSPPANATAPP. Residues 475-495 form a helical membrane-spanning segment; the sequence is VYGVGVLFLLPALLALAALAA. Over 496 to 501 the chain is Cytoplasmic; it reads APAGPR. A helical transmembrane segment spans residues 502–522; sequence LALVAAVLVLVASALRSAYML. Over 523-542 the chain is Extracellular; sequence TDPYGSQARLGVRGGLVLYN. Residues 543–563 traverse the membrane as a helical segment; the sequence is LPFPLLLTALAALTLLGLGAG. Residues 564-570 lie on the Cytoplasmic side of the membrane; sequence LPPPLQN. A helical transmembrane segment spans residues 571–591; it reads PLLLGAVALVHGVGLLATDLL. The Extracellular segment spans residues 592–598; it reads STWSVLN. Residues 599 to 619 form a helical membrane-spanning segment; that stretch reads LLTQGLSCAWGAAVALGTLCL. Residues 620-638 are Cytoplasmic-facing; sequence CRRRLLDGPRGWDASPGPR. A helical transmembrane segment spans residues 639–659; that stretch reads LLAVAGALGLLASGLQLAAAL. At 660-679 the chain is on the extracellular side; that stretch reads WLYPGPGRVGRFSWAWWGVH. Residues 680–700 form a helical membrane-spanning segment; the sequence is FWLRLLELTWALALALAAVAA. Residues 701 to 981 are Cytoplasmic-facing; it reads ARPRPPTEHA…RSASSDTIEL (281 aa). The interval 759-807 is disordered; sequence AESGQLATPSSGAWGSAASLGRGPQGGPGLSRNGVGPAPSLSELDLRPP. Residues 765–780 are compositionally biased toward low complexity; the sequence is ATPSSGAWGSAASLGR. Position 777 is a phosphoserine (serine 777). Omega-N-methylarginine is present on arginine 780. Phosphoserine occurs at positions 789, 798, 808, 815, 854, 874, 902, 903, and 911. The interval 836–865 is disordered; that stretch reads LRGLASPPPGGALRPRRGSHPKAELDDAGS. Positions 937 to 981 are disordered; the sequence is TVQLLPAPTPAPDSTAARQGDGQGEVQPRGKPGESRSASSDTIEL. Residues 972 to 981 are compositionally biased toward polar residues; that stretch reads RSASSDTIEL.

It localises to the membrane. The sequence is that of Proline-rich transmembrane protein 3 (PRRT3) from Homo sapiens (Human).